A 204-amino-acid polypeptide reads, in one-letter code: ATP synthase subunit 4, mitochondrial (204 aa).

The next 2 membrane-spanning stretches (helical) occupy residues G27 to V47 and I52 to Y72.

As to quaternary structure, F-type ATP synthases have 2 components, the catalytic core F(1) and the membrane-embedded component F(0), linked together by a central stalk and a peripheral stalk. The central stalk, also called rotor shaft, is often seen as part of F(1). The peripheral stalk is seen as part of F(0). F(0) contains the membrane channel next to the rotor. F-type ATP synthases form dimers but each monomer functions independently in ATP generation. The dimer consists of 18 different polypeptides: ATP1 (subunit alpha, part of F(1), 3 molecules per monomer), ATP2 (subunit beta, part of F(1), 3 molecules per monomer), ATP3 (subunit gamma, part of the central stalk), ATP4 (subunit b, part of the peripheral stalk), ATP5/OSCP (subunit 5/OSCP, part of the peripheral stalk), ATP6 (subunit a, part of the peripheral stalk), ATP7 (subunit d, part of the peripheral stalk), ATP8 (subunit 8, part of the peripheral stalk), OLI1 (subunit c, part of the rotor, 10 molecules per monomer), ATP14 (subunit h, part of the peripheral stalk), ATP15 (subunit epsilon, part of the central stalk), ATP16 (subunit delta, part of the central stalk), ATP17 (subunit f, part of the peripheral stalk), ATP18 (subunit i/j, part of the peripheral stalk). Dimer-specific subunits are ATP19 (subunit k, at interface between monomers), ATP20 (subunit g, at interface between monomers), TIM11 (subunit e, at interface between monomers). Also contains subunit L.

It is found in the mitochondrion inner membrane. Functionally, mitochondrial membrane ATP synthase (F(1)F(0) ATP synthase or Complex V) produces ATP from ADP in the presence of a proton gradient across the membrane which is generated by electron transport complexes of the respiratory chain. F-type ATP synthases consist of two structural domains, F(1) - containing the extramembraneous catalytic core, and F(0) - containing the membrane proton channel, linked together by a central stalk and a peripheral stalk. During catalysis, ATP synthesis in the catalytic domain of F(1) is coupled via a rotary mechanism of the central stalk subunits to proton translocation. Part of the complex F(0) domain and the peripheral stalk, which acts as a stator to hold the catalytic alpha/ATP1(3)beta/ATP2(3) subcomplex and subunit a/ATP6 static relative to the rotary elements. The polypeptide is ATP synthase subunit 4, mitochondrial (Pichia angusta (Yeast)).